The primary structure comprises 520 residues: L-cysteine:1D-myo-inositol 2-amino-2-deoxy-alpha-D-glucopyranoside ligase (520 aa).

C48 serves as a coordination point for Zn(2+). Residues 48–51, T63, and 86–88 contribute to the L-cysteinyl-5'-AMP site; these read CGIT and NVT. The 'HIGH' region signature appears at 50–60; that stretch reads ITPYDSTHLGH. Residues 192–197 carry the 'ERGGDP' region motif; the sequence is ERGGDP. L-cysteinyl-5'-AMP is bound at residue W232. Residue C236 coordinates Zn(2+). 254-256 provides a ligand contact to L-cysteinyl-5'-AMP; that stretch reads GED. H261 contributes to the Zn(2+) binding site. An L-cysteinyl-5'-AMP-binding site is contributed by I288. The 'KMSKS' region motif lies at 294–298; that stretch reads KMSKS.

The protein belongs to the class-I aminoacyl-tRNA synthetase family. MshC subfamily. In terms of assembly, monomer. Zn(2+) is required as a cofactor.

The catalysed reaction is 1D-myo-inositol 2-amino-2-deoxy-alpha-D-glucopyranoside + L-cysteine + ATP = 1D-myo-inositol 2-(L-cysteinylamino)-2-deoxy-alpha-D-glucopyranoside + AMP + diphosphate + H(+). Catalyzes the ATP-dependent condensation of GlcN-Ins and L-cysteine to form L-Cys-GlcN-Ins. The chain is L-cysteine:1D-myo-inositol 2-amino-2-deoxy-alpha-D-glucopyranoside ligase from Corynebacterium kroppenstedtii (strain DSM 44385 / JCM 11950 / CIP 105744 / CCUG 35717).